A 310-amino-acid polypeptide reads, in one-letter code: N-acetyl-gamma-glutamyl-phosphate reductase (310 aa).

The active site involves Cys117.

This sequence belongs to the NAGSA dehydrogenase family. Type 2 subfamily.

The protein resides in the cytoplasm. It catalyses the reaction N-acetyl-L-glutamate 5-semialdehyde + phosphate + NADP(+) = N-acetyl-L-glutamyl 5-phosphate + NADPH + H(+). It functions in the pathway amino-acid biosynthesis; L-arginine biosynthesis; N(2)-acetyl-L-ornithine from L-glutamate: step 3/4. Its function is as follows. Catalyzes the NADPH-dependent reduction of N-acetyl-5-glutamyl phosphate to yield N-acetyl-L-glutamate 5-semialdehyde. The polypeptide is N-acetyl-gamma-glutamyl-phosphate reductase (Brucella abortus (strain S19)).